The sequence spans 302 residues: RELT-like protein 2 (302 aa).

The chain crosses the membrane as a helical span at residues 15–35 (LYMLFLLVLVFFLMGLVGFMI). 4 disordered regions span residues 47 to 68 (RTSR…DDVN), 135 to 164 (CSRS…TTVF), 177 to 212 (RYGL…GQPR), and 247 to 302 (VPCT…AGGM). A Phosphoserine modification is found at Ser-52. Composition is skewed to basic and acidic residues over residues 148–158 (RSKEGKGRPRP) and 177–188 (RYGLHEHRDGSP). Positions 277 to 294 (QEANGQPTKLDTSGQQDS) are enriched in polar residues.

The protein belongs to the RELT family. Interacts with RELT, RELL1, OXSR1, PLSCR1 and TRAF2.

Its subcellular location is the cell membrane. Its function is as follows. Induces activation of MAPK14/p38 cascade, when overexpressed. Induces apoptosis, when overexpressed. In Rattus norvegicus (Rat), this protein is RELT-like protein 2 (Rell2).